The primary structure comprises 152 residues: UPF0756 membrane protein Helmi_09930 (152 aa).

The next 5 helical transmembrane spans lie at 6–26, 52–72, 75–95, 111–131, and 132–152; these read VLLI…TALA, TGLI…KVGL, VLLS…VLAT, IIVG…GIPV, and GPLM…WLSK.

It belongs to the UPF0756 family.

It is found in the cell membrane. This chain is UPF0756 membrane protein Helmi_09930, found in Heliobacterium modesticaldum (strain ATCC 51547 / Ice1).